Here is a 316-residue protein sequence, read N- to C-terminus: Acetaldehyde dehydrogenase (316 aa).

11–14 (SGNI) serves as a coordination point for NAD(+). The active-site Acyl-thioester intermediate is the C131. Residues 162–170 (SAGPGTRAN) and N289 contribute to the NAD(+) site.

It belongs to the acetaldehyde dehydrogenase family. Interacts with MhpE.

The enzyme catalyses acetaldehyde + NAD(+) + CoA = acetyl-CoA + NADH + H(+). Its pathway is aromatic compound metabolism; 3-phenylpropanoate degradation. In terms of biological role, catalyzes the conversion of acetaldehyde to acetyl-CoA, using NAD(+) and coenzyme A. Is the final enzyme in the meta-cleavage pathway for the degradation of aromatic compounds. The protein is Acetaldehyde dehydrogenase of Escherichia coli O7:K1 (strain IAI39 / ExPEC).